Here is a 37-residue protein sequence, read N- to C-terminus: Lambda-hexatoxin-Hv1c (37 aa).

Cystine bridges form between C3–C17, C10–C22, C13–C14, and C16–C32.

This sequence belongs to the neurotoxin 11 (kappa toxin) family. As to expression, expressed by the venom gland.

The protein resides in the secreted. This excitatory toxin inhibits insect calcium-activated potassium (KCa) channels (Slo-type). Pan-neuronal expression in Drosophila is lethal but flies engineered to express the toxin only in clock neurons have defects in circadian rhythm but a normal lifespan. The chain is Lambda-hexatoxin-Hv1c from Hadronyche versuta (Blue mountains funnel-web spider).